The chain runs to 437 residues: Glutamyl-tRNA reductase (437 aa).

Substrate is bound by residues 49–52 (TCNR), Ser109, 114–116 (ETQ), and Gln120. Cys50 (nucleophile) is an active-site residue. 189–194 (GAGEMS) is an NADP(+) binding site.

This sequence belongs to the glutamyl-tRNA reductase family. Homodimer.

It carries out the reaction (S)-4-amino-5-oxopentanoate + tRNA(Glu) + NADP(+) = L-glutamyl-tRNA(Glu) + NADPH + H(+). It functions in the pathway porphyrin-containing compound metabolism; protoporphyrin-IX biosynthesis; 5-aminolevulinate from L-glutamyl-tRNA(Glu): step 1/2. Functionally, catalyzes the NADPH-dependent reduction of glutamyl-tRNA(Glu) to glutamate 1-semialdehyde (GSA). The protein is Glutamyl-tRNA reductase of Listeria welshimeri serovar 6b (strain ATCC 35897 / DSM 20650 / CCUG 15529 / CIP 8149 / NCTC 11857 / SLCC 5334 / V8).